The sequence spans 156 residues: ATP synthase subunit b (156 aa).

The helical transmembrane segment at 12–32 (VAFFIFVIFCMKFVWPPVIAA) threads the bilayer.

It belongs to the ATPase B chain family. F-type ATPases have 2 components, F(1) - the catalytic core - and F(0) - the membrane proton channel. F(1) has five subunits: alpha(3), beta(3), gamma(1), delta(1), epsilon(1). F(0) has three main subunits: a(1), b(2) and c(10-14). The alpha and beta chains form an alternating ring which encloses part of the gamma chain. F(1) is attached to F(0) by a central stalk formed by the gamma and epsilon chains, while a peripheral stalk is formed by the delta and b chains.

The protein localises to the cell inner membrane. F(1)F(0) ATP synthase produces ATP from ADP in the presence of a proton or sodium gradient. F-type ATPases consist of two structural domains, F(1) containing the extramembraneous catalytic core and F(0) containing the membrane proton channel, linked together by a central stalk and a peripheral stalk. During catalysis, ATP synthesis in the catalytic domain of F(1) is coupled via a rotary mechanism of the central stalk subunits to proton translocation. Functionally, component of the F(0) channel, it forms part of the peripheral stalk, linking F(1) to F(0). This is ATP synthase subunit b from Pseudomonas savastanoi pv. phaseolicola (strain 1448A / Race 6) (Pseudomonas syringae pv. phaseolicola (strain 1448A / Race 6)).